A 37-amino-acid polypeptide reads, in one-letter code: Potassium channel toxin alpha-KTx 2.14 (37 aa).

Intrachain disulfides connect cysteine 7–cysteine 28, cysteine 13–cysteine 33, and cysteine 17–cysteine 35.

Belongs to the short scorpion toxin superfamily. Potassium channel inhibitor family. Alpha-KTx 02 subfamily. Expressed by the venom gland.

The protein localises to the secreted. Its function is as follows. Reversibly blocks hKv1.1/KCNA1 (50% inhibition of current at 1 uM). Seems not to be voltage-dependent. In Heteroctenus garridoi (Cuban scorpion), this protein is Potassium channel toxin alpha-KTx 2.14.